A 148-amino-acid chain; its full sequence is Single-stranded DNA-binding protein, mitochondrial (148 aa).

A mitochondrion-targeting transit peptide spans Met1–His16. Residues Leu30 to Ser141 form the SSB domain. Ser67 and Ser79 each carry phosphoserine. Residue Lys113 is modified to N6-acetyllysine. At Lys122 the chain carries N6-succinyllysine.

In terms of assembly, homotetramer. Interacts with MPG/AAG, through inhibition of its glycosylase activity it potentially prevents formation of DNA breaks in ssDNA, ensuring that base removal primarily occurs in dsDNA. Interacts with POLDIP2. Interacts with PRIMPOL.

It localises to the mitochondrion. Its subcellular location is the mitochondrion matrix. The protein resides in the mitochondrion nucleoid. In terms of biological role, binds preferentially and cooperatively to pyrimidine rich single-stranded DNA (ss-DNA). In vitro, required to maintain the copy number of mitochondrial DNA (mtDNA) and plays a crucial role during mtDNA replication by stimulating the activity of the replisome components POLG and TWNK at the replication fork. Promotes the activity of the gamma complex polymerase POLG, largely by organizing the template DNA and eliminating secondary structures to favor ss-DNA conformations that facilitate POLG activity. In addition it is able to promote the 5'-3' unwinding activity of the mtDNA helicase TWNK. May also function in mtDNA repair. This Bos taurus (Bovine) protein is Single-stranded DNA-binding protein, mitochondrial (SSBP1).